Reading from the N-terminus, the 324-residue chain is Polycomb complex protein BMI-1 (324 aa).

Residues 18–57 form an RING-type zinc finger; it reads CVLCGGYFIDATTIIECLHSFCKTCIVRYLETSKYCPICD. Positions 81-95 match the Nuclear localization signal motif; sequence KLVPGLFKNEMKRRR. Residues 160–180 form an interaction with PHC2 region; it reads RYLRCPAAMTVMHLRKFLRSK. The segment at 162-226 is interaction with E4F1; it reads LRCPAAMTVM…GPLPLKYRVR (65 aa). The interval 232 to 324 is disordered; the sequence is MKMSHQRDGL…LNGSSATSSG (93 aa). Residues 264 to 276 show a composition bias toward low complexity; it reads PSTSSCLPSPSTP. Over residues 277–307 the composition is skewed to polar residues; that stretch reads VQSPHPQFPHISSTMNGTSNSPSANHQSSFA. A compositionally biased stretch (low complexity) spans 313-324; it reads SSLNGSSATSSG.

As to quaternary structure, component of a PRC1-like complex. Identified in a PRC1-like HPRC-H complex with CBX2, CBX4, CBX8, PHC1, PHC2, PHC3, RING1 and RNF2. Interacts with RNF2/RING2. Interacts with RING1. Part of a complex that contains RNF2, UB2D3 and BMI1, where RNF2 and BMI1 form a tight heterodimer, and UB2D3 interacts only with RNF2. The complex composed of RNF2, UB2D3 and BMI1 binds nucleosomes, and has activity only with nucleosomal histone H2A. Interacts with CBX7 and CBX8. Interacts with SPOP. Part of a complex consisting of BMI1, CUL3 and SPOP. Interacts with E4F1. Interacts with PHC2. Interacts with zinc finger protein ZNF277. May be part of a complex including at least ZNF277, BMI1 and RNF2/RING2. May be polyubiquitinated; which does not lead to proteasomal degradation. Monoubiquitinated. Detected in most organs with high expression levels in thymus, heart, brain and testis.

Its subcellular location is the nucleus. The protein localises to the cytoplasm. Functionally, component of a Polycomb group (PcG) multiprotein PRC1-like complex, a complex class required to maintain the transcriptionally repressive state of many genes, including Hox genes, throughout development. PcG PRC1 complex acts via chromatin remodeling and modification of histones; it mediates monoubiquitination of histone H2A 'Lys-119', rendering chromatin heritably changed in its expressibility. The complex composed of RNF2, UB2D3 and BMI1 binds nucleosomes, and has activity only with nucleosomal histone H2A. In the PRC1-like complex, regulates the E3 ubiquitin-protein ligase activity of RNF2/RING2. The sequence is that of Polycomb complex protein BMI-1 (Bmi1) from Mus musculus (Mouse).